Consider the following 599-residue polypeptide: Elongation factor 4 (599 aa).

The 183-residue stretch at 5–187 (NHIRNFSIIA…QIVQLVPPPE (183 aa)) folds into the tr-type G domain. GTP is bound by residues 17–22 (DHGKST) and 134–137 (NKMD).

It belongs to the TRAFAC class translation factor GTPase superfamily. Classic translation factor GTPase family. LepA subfamily.

It is found in the cell inner membrane. It catalyses the reaction GTP + H2O = GDP + phosphate + H(+). Functionally, required for accurate and efficient protein synthesis under certain stress conditions. May act as a fidelity factor of the translation reaction, by catalyzing a one-codon backward translocation of tRNAs on improperly translocated ribosomes. Back-translocation proceeds from a post-translocation (POST) complex to a pre-translocation (PRE) complex, thus giving elongation factor G a second chance to translocate the tRNAs correctly. Binds to ribosomes in a GTP-dependent manner. The sequence is that of Elongation factor 4 from Hahella chejuensis (strain KCTC 2396).